Reading from the N-terminus, the 270-residue chain is 4-hydroxy-tetrahydrodipicolinate reductase (270 aa).

NAD(+) contacts are provided by residues 9–14 (GAGGRM) and Glu35. Arg36 lines the NADP(+) pocket. NAD(+)-binding positions include 99-101 (GTT) and 123-126 (ASNF). The Proton donor/acceptor role is filled by His156. Position 157 (His157) interacts with (S)-2,3,4,5-tetrahydrodipicolinate. The active-site Proton donor is Lys160. (S)-2,3,4,5-tetrahydrodipicolinate is bound at residue 166–167 (GT).

The protein belongs to the DapB family.

Its subcellular location is the cytoplasm. The enzyme catalyses (S)-2,3,4,5-tetrahydrodipicolinate + NAD(+) + H2O = (2S,4S)-4-hydroxy-2,3,4,5-tetrahydrodipicolinate + NADH + H(+). It catalyses the reaction (S)-2,3,4,5-tetrahydrodipicolinate + NADP(+) + H2O = (2S,4S)-4-hydroxy-2,3,4,5-tetrahydrodipicolinate + NADPH + H(+). It participates in amino-acid biosynthesis; L-lysine biosynthesis via DAP pathway; (S)-tetrahydrodipicolinate from L-aspartate: step 4/4. Its function is as follows. Catalyzes the conversion of 4-hydroxy-tetrahydrodipicolinate (HTPA) to tetrahydrodipicolinate. The protein is 4-hydroxy-tetrahydrodipicolinate reductase of Pasteurella multocida (strain Pm70).